The sequence spans 538 residues: RNA-binding protein RO60 (538 aa).

M1 bears the N-acetylmethionine mark. Phosphoserine is present on residues S4 and S19. The TROVE domain occupies 16–369 (IANSQDGYVW…TFKTVEPTGK (354 aa)). The tract at residues 120-284 (RIPTHLFTFI…EMPLTALLRN (165 aa)) is RNA-binding. Residues K224 and K359 each carry the N6-acetyllysine modification. Residues 361 to 538 (FKTVEPTGKR…VIRNFTLDMI (178 aa)) are VWFA-like domain. A divalent metal cation is bound by residues S378, S380, and T445.

This sequence belongs to the Ro 60 kDa family. In terms of assembly, identified in a IGF2BP1-dependent mRNP granule complex containing untranslated mRNAs. Found in a complex with PUF60 and Y5 RNA. Interacts with RAB11FIP5.

It localises to the cytoplasm. In terms of biological role, RNA-binding protein that binds to misfolded non-coding RNAs, pre-5S rRNA, and several small cytoplasmic RNA molecules known as Y RNAs. Binds to endogenous Alu retroelements which are induced by type I interferon and stimulate porinflammatory cytokine secretion. Regulates the expression of Alu retroelements as well as inflammatory genes. May play roles in cilia formation and/or maintenance. The polypeptide is RNA-binding protein RO60 (Homo sapiens (Human)).